A 554-amino-acid chain; its full sequence is Protein NODULATION SIGNALING PATHWAY 1 (554 aa).

The interval 76-165 (TTSTTSLEPN…NSNNGNNKDG (90 aa)) is disordered. Residues 82–91 (LEPNSFNNIP) are compositionally biased toward polar residues. The span at 95–107 (LPKKRNAEDELSL) shows a compositional bias: basic and acidic residues. Low complexity predominate over residues 150–162 (AKANGSNSNNGNN). Residues 159 to 548 (NGNNKDGRWA…QPVSFCSLWK (390 aa)) enclose the GRAS domain. The tract at residues 166–227 (RWAEQLLNPC…HHLSSSSSST (62 aa)) is leucine repeat I (LRI). A VHIID region spans residues 246–315 (LLKFYEFSPW…GGPPPLVRLT (70 aa)). Positions 281–285 (LHILD) match the VHIID motif. A leucine repeat II (LRII) region spans residues 331–373 (TPFSIGPCGDTFSSGLLGYAQSLNVNLQIKKLDNHPLQTLNAK). Positions 383–468 (LIVCAQFRLH…RDSDERKMME (86 aa)) are PFYRE. The interval 471–548 (AAKALTNQRE…QPVSFCSLWK (78 aa)) is SAW.

The protein belongs to the GRAS family. Expressed in epidermal and cortical root cells.

Its subcellular location is the nucleus. Functionally, transcriptional regulator essential for Nod-factor-induced gene expression. Acts downstream of calcium spiking. May be a target of DMI3, a calcium/calmodulin-dependent protein kinase (CCaMK). Is essential for Nod factor-elicited expression of ERN1. Transcription factor involved in the control of strigolactone biosynthesis in roots through the activation of the beta-carotene isomerase D27, which participates in a pathway leading to biosynthesis of strigolactones. This chain is Protein NODULATION SIGNALING PATHWAY 1, found in Medicago truncatula (Barrel medic).